The primary structure comprises 158 residues: NAD(P)H-quinone oxidoreductase subunit J, chloroplastic (158 aa).

It belongs to the complex I 30 kDa subunit family. In terms of assembly, NDH is composed of at least 16 different subunits, 5 of which are encoded in the nucleus.

It is found in the plastid. The protein localises to the chloroplast thylakoid membrane. The enzyme catalyses a plastoquinone + NADH + (n+1) H(+)(in) = a plastoquinol + NAD(+) + n H(+)(out). The catalysed reaction is a plastoquinone + NADPH + (n+1) H(+)(in) = a plastoquinol + NADP(+) + n H(+)(out). Functionally, NDH shuttles electrons from NAD(P)H:plastoquinone, via FMN and iron-sulfur (Fe-S) centers, to quinones in the photosynthetic chain and possibly in a chloroplast respiratory chain. The immediate electron acceptor for the enzyme in this species is believed to be plastoquinone. Couples the redox reaction to proton translocation, and thus conserves the redox energy in a proton gradient. The protein is NAD(P)H-quinone oxidoreductase subunit J, chloroplastic of Buxus microphylla (Littleleaf boxwood).